The following is a 219-amino-acid chain: MAIFSVYVVNKAGGLIYQLDSYAPRAEAEKTFSYPLDLLLKLHDERVLVAFGQRDGIRVGHAVLAINGMDVNGRYTADGKEVLEYLGNPANYPVSIRFGRPRLTSNEKLMLASMFHSLFAIGSQLSPEQGSSGIEMLETDTFKLHCYQTLTGIKFVVLADPRQAGIDSLLRKIYEIYSDFALKNPFYSLEMPIRCELFDQNLKLALEVAEKAGTFGPGS.

Belongs to the TRAPP small subunits family. TRAPPC4 subfamily. Component of the multisubunit TRAPP (transport protein particle) complex, which includes at least TRAPPC2, TRAPPC2L, TRAPPC3, TRAPPC3L, TRAPPC4, TRAPPC5, TRAPPC8, TRAPPC9, TRAPPC10, TRAPPC11 and TRAPPC12. Interacts with SDC2.

It localises to the postsynaptic cell membrane. Its subcellular location is the golgi apparatus membrane. The protein localises to the endoplasmic reticulum. The protein resides in the vesicle. Its function is as follows. Core component of the TRAPP complexes which has a function of guanine nucleotide exchange factor activity for Rab1 GTPase. Plays a role in vesicular transport from endoplasmic reticulum to Golgi and autophagy. May play a role in dendrite postsynaptic membrane trafficking. The protein is Trafficking protein particle complex subunit 4 of Homo sapiens (Human).